The following is a 469-amino-acid chain: Interstitial collagenase (469 aa).

Positions 1 to 19 (MFSLLLLLLLLCNTGSHGF) are cleaved as a signal peptide. A propeptide spans 20–99 (PAATSETQEQ…PRCGVPDVAE (80 aa)) (activation peptide). Position 57 is a phosphoserine (S57). The Cysteine switch signature appears at 90–97 (PRCGVPDV). C92 is a Zn(2+) binding site. N120 carries N-linked (GlcNAc...) asparagine glycosylation. The Ca(2+) site is built by D124 and D158. Zn(2+)-binding residues include H168 and D170. Positions 175, 176, 178, and 180 each coordinate Ca(2+). A Zn(2+)-binding site is contributed by H183. Ca(2+)-binding residues include G190, G192, and D194. H196 serves as a coordination point for Zn(2+). Ca(2+) contacts are provided by D198, E199, and E201. H218 provides a ligand contact to Zn(2+). E219 is a catalytic residue. The Zn(2+) site is built by H222 and H228. At T274 the chain carries Phosphothreonine. 4 Hemopexin repeats span residues 275-324 (PQVC…WPQV), 325-371 (PNGL…FGFP), 374-422 (VKNI…FPGI), and 423-466 (GNKV…WFNC). C278 and C466 are joined by a disulfide. D285 and Q329 together coordinate Ca(2+). Phosphotyrosine; by PKDCC is present on Y360. 2 residues coordinate Ca(2+): D378 and D427.

Belongs to the peptidase M10A family. It depends on Ca(2+) as a cofactor. The cofactor is Zn(2+). Undergoes autolytic cleavage to produce a N-terminal fragment having reduced collagenolytic activity. Post-translationally, tyrosine phosphorylated in platelets by PKDCC/VLK.

The protein resides in the secreted. It is found in the extracellular space. The protein localises to the extracellular matrix. It catalyses the reaction Cleavage of the triple helix of collagen at about three-quarters of the length of the molecule from the N-terminus, at 775-Gly-|-Ile-776 in the alpha1(I) chain. Cleaves synthetic substrates and alpha-macroglobulins at bonds where P1' is a hydrophobic residue.. Its activity is regulated as follows. Can be activated without removal of the activation peptide. Its function is as follows. Cleaves collagens of types I, II, and III at one site in the helical domain. Also cleaves collagens of types VII and X. The protein is Interstitial collagenase (MMP1) of Sus scrofa (Pig).